Consider the following 261-residue polypeptide: ATP synthase subunit a (261 aa).

8 helical membrane-spanning segments follow: residues 30–50, 63–83, 96–116, 125–145, 151–171, 187–207, 214–234, and 235–255; these read VLFT…GLFM, WQVA…ANIG, LFMF…VLGL, IAIT…VGFW, FFSL…IAPI, LFVA…FVIN, LWLG…ISAL, and ELLV…LYIN.

It belongs to the ATPase A chain family. F-type ATPases have 2 components, CF(1) - the catalytic core - and CF(0) - the membrane proton channel. CF(1) has five subunits: alpha(3), beta(3), gamma(1), delta(1), epsilon(1). CF(0) has three main subunits: a(1), b(2) and c(9-12). The alpha and beta chains form an alternating ring which encloses part of the gamma chain. CF(1) is attached to CF(0) by a central stalk formed by the gamma and epsilon chains, while a peripheral stalk is formed by the delta and b chains.

It is found in the cell inner membrane. Key component of the proton channel; it plays a direct role in the translocation of protons across the membrane. The protein is ATP synthase subunit a of Sphingopyxis alaskensis (strain DSM 13593 / LMG 18877 / RB2256) (Sphingomonas alaskensis).